The chain runs to 282 residues: Proteasome subunit beta (282 aa).

Positions 1–55 (MDNSSTGRYPAASLPPAYLRPGSSSFTDFLRAQAPELLPTARSFPEGSVVQAAHG) are cleaved as a propeptide — removed in mature form; by autocatalysis. Thr-56 functions as the Nucleophile in the catalytic mechanism.

The protein belongs to the peptidase T1B family. The 20S proteasome core is composed of 14 alpha and 14 beta subunits that assemble into four stacked heptameric rings, resulting in a barrel-shaped structure. The two inner rings, each composed of seven catalytic beta subunits, are sandwiched by two outer rings, each composed of seven alpha subunits. The catalytic chamber with the active sites is on the inside of the barrel. Has a gated structure, the ends of the cylinder being occluded by the N-termini of the alpha-subunits. Is capped by the proteasome-associated ATPase, ARC.

It is found in the cytoplasm. It catalyses the reaction Cleavage of peptide bonds with very broad specificity.. The protein operates within protein degradation; proteasomal Pup-dependent pathway. With respect to regulation, the formation of the proteasomal ATPase ARC-20S proteasome complex, likely via the docking of the C-termini of ARC into the intersubunit pockets in the alpha-rings, may trigger opening of the gate for substrate entry. Interconversion between the open-gate and close-gate conformations leads to a dynamic regulation of the 20S proteasome proteolysis activity. Its function is as follows. Component of the proteasome core, a large protease complex with broad specificity involved in protein degradation. This chain is Proteasome subunit beta, found in Actinosynnema mirum (strain ATCC 29888 / DSM 43827 / JCM 3225 / NBRC 14064 / NCIMB 13271 / NRRL B-12336 / IMRU 3971 / 101).